Consider the following 107-residue polypeptide: Protein HitA (107 aa).

An HIT domain is found at 5–107; that stretch reads IFCKIAAKEI…LHIHIMGTPV (103 aa). The Histidine triad motif motif lies at 97 to 101; the sequence is HLHIH.

In Neisseria gonorrhoeae, this protein is Protein HitA (hitA).